Reading from the N-terminus, the 521-residue chain is Bifunctional purine biosynthesis protein PurH (521 aa).

Positions 1–147 (MAKITRALIS…KNNADVTVLV (147 aa)) constitute an MGS-like domain.

This sequence belongs to the PurH family.

It catalyses the reaction (6R)-10-formyltetrahydrofolate + 5-amino-1-(5-phospho-beta-D-ribosyl)imidazole-4-carboxamide = 5-formamido-1-(5-phospho-D-ribosyl)imidazole-4-carboxamide + (6S)-5,6,7,8-tetrahydrofolate. It carries out the reaction IMP + H2O = 5-formamido-1-(5-phospho-D-ribosyl)imidazole-4-carboxamide. The protein operates within purine metabolism; IMP biosynthesis via de novo pathway; 5-formamido-1-(5-phospho-D-ribosyl)imidazole-4-carboxamide from 5-amino-1-(5-phospho-D-ribosyl)imidazole-4-carboxamide (10-formyl THF route): step 1/1. It participates in purine metabolism; IMP biosynthesis via de novo pathway; IMP from 5-formamido-1-(5-phospho-D-ribosyl)imidazole-4-carboxamide: step 1/1. This is Bifunctional purine biosynthesis protein PurH from Geobacter sulfurreducens (strain ATCC 51573 / DSM 12127 / PCA).